Here is a 503-residue protein sequence, read N- to C-terminus: Nuclear respiratory factor 1 (503 aa).

Positions 1–78 (MEEHGVTQTE…AHLAAAGPVG (78 aa)) are dimerization. Residues 36–57 (SMLSADEDSPSSPEDTSYDDSD) are disordered. Phosphoserine; by CK2 is present on residues S39, S44, S46, S47, and S52. A Nuclear localization signal motif is present at residues 88 to 116 (GKKRKRPHVFESNPSIRKRQQTRLLRKLR). The DNA-binding element occupies 109–305 (TRLLRKLRAT…SIAHLVPSQT (197 aa)). K139 participates in a covalent cross-link: Glycyl lysine isopeptide (Lys-Gly) (interchain with G-Cter in SUMO2). The tract at residues 301 to 476 (VPSQTVVQTF…AQGNGPVQVA (176 aa)) is required for transcriptional activation.

It belongs to the NRF1/Ewg family. In terms of assembly, homodimer. Binds DNA as a dimer. Interacts with PPRC1. In terms of processing, phosphorylation enhances DNA binding. Ubiquitously expressed with strongest expression in skeletal muscle.

The protein localises to the nucleus. In terms of biological role, transcription factor that activates the expression of the EIF2S1 (EIF2-alpha) gene. Links the transcriptional modulation of key metabolic genes to cellular growth and development. Implicated in the control of nuclear genes required for respiration, heme biosynthesis, and mitochondrial DNA transcription and replication. This Homo sapiens (Human) protein is Nuclear respiratory factor 1 (NRF1).